A 258-amino-acid polypeptide reads, in one-letter code: Hydroxyacylglutathione hydrolase (258 aa).

Positions 56, 58, 60, 61, 112, 132, and 170 each coordinate Zn(2+).

Belongs to the metallo-beta-lactamase superfamily. Glyoxalase II family. Monomer. Requires Zn(2+) as cofactor.

It carries out the reaction an S-(2-hydroxyacyl)glutathione + H2O = a 2-hydroxy carboxylate + glutathione + H(+). Its pathway is secondary metabolite metabolism; methylglyoxal degradation; (R)-lactate from methylglyoxal: step 2/2. In terms of biological role, thiolesterase that catalyzes the hydrolysis of S-D-lactoyl-glutathione to form glutathione and D-lactic acid. This is Hydroxyacylglutathione hydrolase from Pseudomonas paraeruginosa (strain DSM 24068 / PA7) (Pseudomonas aeruginosa (strain PA7)).